The following is a 37-amino-acid chain: uncharacterized protein (37 aa).

A helical membrane pass occupies residues 16-36; that stretch reads FALIVVLFILLIIVGTAFVGG.

This sequence belongs to the SscA family.

It localises to the membrane. This is an uncharacterized protein from Bacillus subtilis (strain 168).